Consider the following 464-residue polypeptide: Glutamate decarboxylase beta (464 aa).

N6-(pyridoxal phosphate)lysine is present on Lys-275.

This sequence belongs to the group II decarboxylase family. Pyridoxal 5'-phosphate is required as a cofactor.

It catalyses the reaction L-glutamate + H(+) = 4-aminobutanoate + CO2. Functionally, converts internalized glutamate to GABA and increases the internal pH. Involved in glutamate-dependent acid resistance in gastric fluid. In Listeria monocytogenes serovar 1/2a (strain ATCC BAA-679 / EGD-e), this protein is Glutamate decarboxylase beta (gadB).